We begin with the raw amino-acid sequence, 257 residues long: Low affinity immunoglobulin gamma Fc region receptor III-A (257 aa).

A signal peptide spans 1 to 19 (MWQLLSPTALLLLVSVPGT). At 20–209 (HAEDPPKSVV…ILSFFLPWHQ (190 aa)) the chain is on the extracellular side. Ig-like C2-type domains follow at residues 25–104 (PKSV…LRLE) and 108–190 (GWLL…VKVT). Intrachain disulfides connect Cys48–Cys90 and Cys129–Cys173. 3 N-linked (GlcNAc...) asparagine glycosylation sites follow: Asn64, Asn134, and Asn162. Asp181 carries an N-linked (GlcNAc...) asparagine; in variant N-181 glycan. The helical transmembrane segment at 210–230 (IIFCLVMGFLFAVDTGLYFSV) threads the bilayer. Topologically, residues 231-257 (RKVLRSSKEDWRNGKVTWSRDPADKGG) are cytoplasmic.

Forms a heterooligomeric complex with ITAM-containing signaling subunits FCER1G. Interacts (via transmembrane domain) with signaling subunits; this interaction is a prerequisite for receptor complex expression on the cell surface and intracellular signal transduction. Binds the Fc region of antigen-complexed IgG. Expressed in polymorphonuclear leukocytes, pulmonary alveolar macrophages and peripheral blood mononuclear cells (at protein level). Found in spleen, and at very low levels in lymph nodes but not in thymus or liver.

The protein resides in the cell membrane. Its function is as follows. Receptor for the invariable Fc fragment of immunoglobulin gamma (IgG). Optimally activated upon binding of clustered antigen-IgG complexes displayed on cell surfaces, triggers lysis of antibody-coated cells, a process known as antibody-dependent cellular cytotoxicity (ADCC). Does not bind free monomeric IgG, thus avoiding inappropriate effector cell activation in the absence of antigenic trigger. Mediates IgG effector functions on natural killer (NK) cells. Binds antigen-IgG complexes generated upon infection and triggers NK cell-dependent cytokine production and degranulation to limit viral load and propagation. Fc-binding subunit that associates with FCER1G adapter to form functional signaling complexes. Following the engagement of antigen-IgG complexes, triggers phosphorylation of immunoreceptor tyrosine-based activation motif (ITAM)-containing adapter with subsequent activation of phosphatidylinositol 3-kinase signaling and sustained elevation of intracellular calcium that ultimately drive NK cell activation. Mediates enhanced ADCC in response to afucosylated IgGs. The sequence is that of Low affinity immunoglobulin gamma Fc region receptor III-A from Sus scrofa (Pig).